The following is a 528-amino-acid chain: Catalase (528 aa).

Residues 1-22 (MADRREKSADQMKLWKESRANQ) show a composition bias toward basic and acidic residues. A disordered region spans residues 1 to 32 (MADRREKSADQMKLWKESRANQKPDVLTTGGG). Residues H75 and N148 contribute to the active site. The NADP(+) site is built by H194, S201, R203, N213, K237, W303, H305, and K306. Y358 provides a ligand contact to heme. The short motif at 525 to 528 (KANL) is the Microbody targeting signal; atypical element.

It belongs to the catalase family. As to quaternary structure, homotetramer. The cofactor is heme. Requires NADP(+) as cofactor.

The protein resides in the peroxisome matrix. It carries out the reaction 2 H2O2 = O2 + 2 H2O. Functionally, catalyzes the degradation of hydrogen peroxide (H(2)O(2)) generated by peroxisomal oxidases to water and oxygen, thereby protecting cells from the toxic effects of hydrogen peroxide. The sequence is that of Catalase (cat) from Glandirana rugosa (Japanese wrinkled frog).